Consider the following 74-residue polypeptide: DNA-directed RNA polymerase subunit omega (74 aa).

The protein belongs to the RNA polymerase subunit omega family. In terms of assembly, the RNAP catalytic core consists of 2 alpha, 1 beta, 1 beta' and 1 omega subunit. When a sigma factor is associated with the core the holoenzyme is formed, which can initiate transcription.

The catalysed reaction is RNA(n) + a ribonucleoside 5'-triphosphate = RNA(n+1) + diphosphate. Promotes RNA polymerase assembly. Latches the N- and C-terminal regions of the beta' subunit thereby facilitating its interaction with the beta and alpha subunits. In Solidesulfovibrio magneticus (strain ATCC 700980 / DSM 13731 / RS-1) (Desulfovibrio magneticus), this protein is DNA-directed RNA polymerase subunit omega.